We begin with the raw amino-acid sequence, 248 residues long: DNA polymerase sliding clamp 2 (248 aa).

This sequence belongs to the PCNA family. Homotrimer. The subunits circularize to form a toroid; DNA passes through its center. Replication factor C (RFC) is required to load the toroid on the DNA.

Its function is as follows. Sliding clamp subunit that acts as a moving platform for DNA processing. Responsible for tethering the catalytic subunit of DNA polymerase and other proteins to DNA during high-speed replication. The chain is DNA polymerase sliding clamp 2 from Sulfurisphaera ohwakuensis.